The primary structure comprises 557 residues: Urocanate hydratase (557 aa).

Residues G52–G53, Q130, G176–G178, E196, R201, N242–A243, Q263–H267, Y273–L274, and Y322 each bind NAD(+). The active site involves C410. G492 contributes to the NAD(+) binding site.

This sequence belongs to the urocanase family. NAD(+) is required as a cofactor.

The protein resides in the cytoplasm. It catalyses the reaction 4-imidazolone-5-propanoate = trans-urocanate + H2O. It participates in amino-acid degradation; L-histidine degradation into L-glutamate; N-formimidoyl-L-glutamate from L-histidine: step 2/3. In terms of biological role, catalyzes the conversion of urocanate to 4-imidazolone-5-propionate. This is Urocanate hydratase from Allorhizobium ampelinum (strain ATCC BAA-846 / DSM 112012 / S4) (Agrobacterium vitis (strain S4)).